Here is a 622-residue protein sequence, read N- to C-terminus: Cell pattern formation-associated protein stuA (622 aa).

2 disordered regions span residues 1–24 and 62–81; these read MASM…QTYA and YPNS…SISS. The 107-residue stretch at 129 to 235 folds into the HTH APSES-type domain; that stretch reads RVTATLWEDE…QHISNLLYHP (107 aa). The segment at residues 163–184 is a DNA-binding region (H-T-H motif); that stretch reads GTKLLNVAGMTRGRRDGILKSE. Disordered stretches follow at residues 239–517 and 549–622; these read NQRN…TPPR and SNSG…SARR. 3 stretches are compositionally biased toward polar residues: residues 274 to 283, 302 to 345, and 355 to 370; these read LQTPVPSHMS, ASAS…ARSM, and GNNL…QSGY. Residues 384 to 395 show a composition bias toward low complexity; sequence PQYAPQQPLPQQ. 4 stretches are compositionally biased toward polar residues: residues 404-421, 455-470, 480-506, and 549-563; these read MPTS…QRGS, SGYN…TNPS, QLTP…NTAP, and SNSG…SMGS. A nuclear localization domain region spans residues 565–590; sequence KRMRDDDDDRIVPPDSRGEFDTKRRK. A compositionally biased stretch (basic and acidic residues) spans 566-586; sequence RMRDDDDDRIVPPDSRGEFDT.

It belongs to the EFG1/PHD1/stuA family.

The protein resides in the nucleus. In terms of biological role, transcription factor that regulates asexual reproduction. Binds the StuA-response elements (StRE) with the consensus sequence 5'-(A/T)CGCG(T/A)N(A/C)-3' at the promoters of target genes. Required from the very earliest events of asexual reproduction until completion of conidiophore development, but is not specifically required for differentiation of conidia. Represses transcription of the abaA developmental regulatory gene and of the developmentally regulated awh11 gene. Controls the expression of the catalase-peroxidase gene cpeA. Plays an important role in cell wall biogenesis during the development by controlling the transcription level of fksA. The polypeptide is Cell pattern formation-associated protein stuA (Emericella nidulans (strain FGSC A4 / ATCC 38163 / CBS 112.46 / NRRL 194 / M139) (Aspergillus nidulans)).